Reading from the N-terminus, the 104-residue chain is Phosphoribosyl-ATP pyrophosphatase (104 aa).

This sequence belongs to the PRA-PH family.

The protein localises to the cytoplasm. It catalyses the reaction 1-(5-phospho-beta-D-ribosyl)-ATP + H2O = 1-(5-phospho-beta-D-ribosyl)-5'-AMP + diphosphate + H(+). Its pathway is amino-acid biosynthesis; L-histidine biosynthesis; L-histidine from 5-phospho-alpha-D-ribose 1-diphosphate: step 2/9. The protein is Phosphoribosyl-ATP pyrophosphatase of Nitrosococcus oceani (strain ATCC 19707 / BCRC 17464 / JCM 30415 / NCIMB 11848 / C-107).